The chain runs to 615 residues: DNA mismatch repair protein MutL (615 aa).

The interval 362-397 (HFAEPAVREPVAPRYSPAPASGSRPAASWPNAQPGY) is disordered. A compositionally biased stretch (low complexity) spans 373-391 (APRYSPAPASGSRPAASWP).

It belongs to the DNA mismatch repair MutL/HexB family.

In terms of biological role, this protein is involved in the repair of mismatches in DNA. It is required for dam-dependent methyl-directed DNA mismatch repair. May act as a 'molecular matchmaker', a protein that promotes the formation of a stable complex between two or more DNA-binding proteins in an ATP-dependent manner without itself being part of a final effector complex. This Escherichia coli O6:H1 (strain CFT073 / ATCC 700928 / UPEC) protein is DNA mismatch repair protein MutL.